Reading from the N-terminus, the 572-residue chain is Proline--tRNA ligase (572 aa).

This sequence belongs to the class-II aminoacyl-tRNA synthetase family. ProS type 1 subfamily. Homodimer.

The protein localises to the cytoplasm. It carries out the reaction tRNA(Pro) + L-proline + ATP = L-prolyl-tRNA(Pro) + AMP + diphosphate. Catalyzes the attachment of proline to tRNA(Pro) in a two-step reaction: proline is first activated by ATP to form Pro-AMP and then transferred to the acceptor end of tRNA(Pro). As ProRS can inadvertently accommodate and process non-cognate amino acids such as alanine and cysteine, to avoid such errors it has two additional distinct editing activities against alanine. One activity is designated as 'pretransfer' editing and involves the tRNA(Pro)-independent hydrolysis of activated Ala-AMP. The other activity is designated 'posttransfer' editing and involves deacylation of mischarged Ala-tRNA(Pro). The misacylated Cys-tRNA(Pro) is not edited by ProRS. This Haemophilus influenzae (strain PittGG) protein is Proline--tRNA ligase.